A 208-amino-acid polypeptide reads, in one-letter code: MVLDELISEFDRGLRSLTGISRMSRPVPVPAEPTVGELTPAERAHAAGLMRVNHVGEVCAQALYQAQKLTARSASSKAMFEEAAREEEDHLAWTAHRLKELDSRPSLLNPLWYAGALAIGVAAGTLGDKVSLGFMAETERQVESHLDGHLSELPATDTASRAIVEQMRVDEVKHGKAATDAGGIELPLPARMLMRAASKVMTRTAYYL.

Positions 57, 87, 90, 139, 171, and 174 each coordinate Fe cation.

This sequence belongs to the COQ7 family. It depends on Fe cation as a cofactor.

It localises to the cell membrane. The enzyme catalyses a 5-methoxy-2-methyl-3-(all-trans-polyprenyl)benzene-1,4-diol + AH2 + O2 = a 3-demethylubiquinol + A + H2O. The protein operates within cofactor biosynthesis; ubiquinone biosynthesis. Functionally, catalyzes the hydroxylation of 2-nonaprenyl-3-methyl-6-methoxy-1,4-benzoquinol during ubiquinone biosynthesis. In Burkholderia ambifaria (strain ATCC BAA-244 / DSM 16087 / CCUG 44356 / LMG 19182 / AMMD) (Burkholderia cepacia (strain AMMD)), this protein is 3-demethoxyubiquinol 3-hydroxylase.